We begin with the raw amino-acid sequence, 111 residues long: Cyanovirin-N homolog (111 aa).

This sequence belongs to the cyanovirin-N family.

In terms of biological role, mannose-binding lectin. This is Cyanovirin-N homolog from Neurospora crassa (strain ATCC 24698 / 74-OR23-1A / CBS 708.71 / DSM 1257 / FGSC 987).